Here is a 352-residue protein sequence, read N- to C-terminus: Dihydroorotate dehydrogenase (quinone) (352 aa).

Residues alanine 68–lysine 72 and threonine 92 contribute to the FMN site. Residue lysine 72 coordinates substrate. Asparagine 117–phenylalanine 121 lines the substrate pocket. FMN-binding residues include asparagine 146 and asparagine 179. Asparagine 179 serves as a coordination point for substrate. The active-site Nucleophile is the serine 182. Asparagine 184 provides a ligand contact to substrate. 2 residues coordinate FMN: lysine 215 and threonine 243. Substrate is bound at residue asparagine 244–threonine 245. Residues glycine 263, glycine 292, and tyrosine 313–serine 314 contribute to the FMN site.

This sequence belongs to the dihydroorotate dehydrogenase family. Type 2 subfamily. In terms of assembly, monomer. FMN is required as a cofactor.

The protein localises to the cell membrane. It catalyses the reaction (S)-dihydroorotate + a quinone = orotate + a quinol. The protein operates within pyrimidine metabolism; UMP biosynthesis via de novo pathway; orotate from (S)-dihydroorotate (quinone route): step 1/1. Its function is as follows. Catalyzes the conversion of dihydroorotate to orotate with quinone as electron acceptor. The protein is Dihydroorotate dehydrogenase (quinone) of Sulfurimonas denitrificans (strain ATCC 33889 / DSM 1251) (Thiomicrospira denitrificans (strain ATCC 33889 / DSM 1251)).